A 732-amino-acid polypeptide reads, in one-letter code: Polyribonucleotide nucleotidyltransferase (732 aa).

Residues aspartate 516 and aspartate 522 each coordinate Mg(2+). One can recognise a KH domain in the interval 582–642; that stretch reads PSSHTITVHP…PKVIAACDYI (61 aa). The 68-residue stretch at 659–726 folds into the S1 motif domain; that stretch reads GDILKGKIKR…KGHKIELGLR (68 aa).

The protein belongs to the polyribonucleotide nucleotidyltransferase family. Mg(2+) serves as cofactor.

Its subcellular location is the cytoplasm. The catalysed reaction is RNA(n+1) + phosphate = RNA(n) + a ribonucleoside 5'-diphosphate. Its function is as follows. Involved in mRNA degradation. Catalyzes the phosphorolysis of single-stranded polyribonucleotides processively in the 3'- to 5'-direction. This chain is Polyribonucleotide nucleotidyltransferase, found in Nitratiruptor sp. (strain SB155-2).